Here is a 55-residue protein sequence, read N- to C-terminus: MAKAVTVKIKLVSTADTGYFYVTKKNSRTQTEKLTMRKYDPVARKHVEFKETKIK.

Belongs to the bacterial ribosomal protein bL33 family.

This Methylobacterium radiotolerans (strain ATCC 27329 / DSM 1819 / JCM 2831 / NBRC 15690 / NCIMB 10815 / 0-1) protein is Large ribosomal subunit protein bL33.